The chain runs to 249 residues: 2,3-bisphosphoglycerate-dependent phosphoglycerate mutase (249 aa).

Substrate contacts are provided by residues 9–16 (RHGESEWN), 22–23 (TG), R61, 88–91 (ERHY), K99, 115–116 (RR), and 184–185 (GN). H10 serves as the catalytic Tele-phosphohistidine intermediate. E88 acts as the Proton donor/acceptor in catalysis.

Belongs to the phosphoglycerate mutase family. BPG-dependent PGAM subfamily.

The enzyme catalyses (2R)-2-phosphoglycerate = (2R)-3-phosphoglycerate. It participates in carbohydrate degradation; glycolysis; pyruvate from D-glyceraldehyde 3-phosphate: step 3/5. Catalyzes the interconversion of 2-phosphoglycerate and 3-phosphoglycerate. The chain is 2,3-bisphosphoglycerate-dependent phosphoglycerate mutase from Cutibacterium acnes (strain DSM 16379 / KPA171202) (Propionibacterium acnes).